Reading from the N-terminus, the 105-residue chain is Small ribosomal subunit protein eS24 (105 aa).

Positions 86–105 (LERNKIEADEEADEEAAEEA) are disordered. The segment covering 93–105 (ADEEADEEAAEEA) has biased composition (acidic residues).

Belongs to the eukaryotic ribosomal protein eS24 family.

This is Small ribosomal subunit protein eS24 from Natronomonas pharaonis (strain ATCC 35678 / DSM 2160 / CIP 103997 / JCM 8858 / NBRC 14720 / NCIMB 2260 / Gabara) (Halobacterium pharaonis).